The following is a 240-amino-acid chain: UDP-2,3-diacylglucosamine hydrolase (240 aa).

Mn(2+) contacts are provided by Asp8, His10, Asp41, Asn78, and His113. 78-79 provides a ligand contact to substrate; sequence NR. Asp121, Ser159, Asn163, Lys166, and His194 together coordinate substrate. 2 residues coordinate Mn(2+): His194 and His196.

Belongs to the LpxH family. Requires Mn(2+) as cofactor.

The protein localises to the cell inner membrane. It carries out the reaction UDP-2-N,3-O-bis[(3R)-3-hydroxytetradecanoyl]-alpha-D-glucosamine + H2O = 2-N,3-O-bis[(3R)-3-hydroxytetradecanoyl]-alpha-D-glucosaminyl 1-phosphate + UMP + 2 H(+). Its pathway is glycolipid biosynthesis; lipid IV(A) biosynthesis; lipid IV(A) from (3R)-3-hydroxytetradecanoyl-[acyl-carrier-protein] and UDP-N-acetyl-alpha-D-glucosamine: step 4/6. Its function is as follows. Hydrolyzes the pyrophosphate bond of UDP-2,3-diacylglucosamine to yield 2,3-diacylglucosamine 1-phosphate (lipid X) and UMP by catalyzing the attack of water at the alpha-P atom. Involved in the biosynthesis of lipid A, a phosphorylated glycolipid that anchors the lipopolysaccharide to the outer membrane of the cell. This Shewanella baltica (strain OS155 / ATCC BAA-1091) protein is UDP-2,3-diacylglucosamine hydrolase.